Consider the following 520-residue polypeptide: 2-isopropylmalate synthase (520 aa).

Positions 5–267 (VIIFDTTLRD…YTNINHQEIY (263 aa)) constitute a Pyruvate carboxyltransferase domain. Residues Asp14, His202, His204, and Asn238 each contribute to the Mn(2+) site. A regulatory domain region spans residues 392-520 (HLDNFNIQSG…RIQQNTKEMV (129 aa)).

Belongs to the alpha-IPM synthase/homocitrate synthase family. LeuA type 1 subfamily. As to quaternary structure, homodimer. It depends on Mn(2+) as a cofactor.

The protein resides in the cytoplasm. It catalyses the reaction 3-methyl-2-oxobutanoate + acetyl-CoA + H2O = (2S)-2-isopropylmalate + CoA + H(+). It participates in amino-acid biosynthesis; L-leucine biosynthesis; L-leucine from 3-methyl-2-oxobutanoate: step 1/4. Functionally, catalyzes the condensation of the acetyl group of acetyl-CoA with 3-methyl-2-oxobutanoate (2-ketoisovalerate) to form 3-carboxy-3-hydroxy-4-methylpentanoate (2-isopropylmalate). This is 2-isopropylmalate synthase from Photorhabdus laumondii subsp. laumondii (strain DSM 15139 / CIP 105565 / TT01) (Photorhabdus luminescens subsp. laumondii).